A 37-amino-acid chain; its full sequence is Cytochrome b6-f complex subunit 5 (37 aa).

A helical membrane pass occupies residues 5–25 (LLSGIVLGMIPVTLAGLFVTA).

Belongs to the PetG family. The 4 large subunits of the cytochrome b6-f complex are cytochrome b6, subunit IV (17 kDa polypeptide, PetD), cytochrome f and the Rieske protein, while the 4 small subunits are PetG, PetL, PetM and PetN. The complex functions as a dimer.

The protein resides in the plastid. Its subcellular location is the chloroplast thylakoid membrane. Component of the cytochrome b6-f complex, which mediates electron transfer between photosystem II (PSII) and photosystem I (PSI), cyclic electron flow around PSI, and state transitions. PetG is required for either the stability or assembly of the cytochrome b6-f complex. The protein is Cytochrome b6-f complex subunit 5 of Staurastrum punctulatum (Green alga).